The primary structure comprises 199 residues: 7-methyl-GTP pyrophosphatase (199 aa).

Residue D76 is the Proton acceptor of the active site.

Belongs to the Maf family. YceF subfamily. A divalent metal cation serves as cofactor.

The protein localises to the cytoplasm. It carries out the reaction N(7)-methyl-GTP + H2O = N(7)-methyl-GMP + diphosphate + H(+). In terms of biological role, nucleoside triphosphate pyrophosphatase that hydrolyzes 7-methyl-GTP (m(7)GTP). May have a dual role in cell division arrest and in preventing the incorporation of modified nucleotides into cellular nucleic acids. This chain is 7-methyl-GTP pyrophosphatase, found in Nitrosococcus oceani (strain ATCC 19707 / BCRC 17464 / JCM 30415 / NCIMB 11848 / C-107).